The sequence spans 624 residues: DNA-directed RNA polymerase subunit gamma (624 aa).

Residues cysteine 70, cysteine 72, cysteine 85, and cysteine 88 each contribute to the Zn(2+) site. Residues aspartate 466, aspartate 468, and aspartate 470 each contribute to the Mg(2+) site.

It belongs to the RNA polymerase beta' chain family. RpoC1 subfamily. In cyanobacteria the RNAP catalytic core is composed of 2 alpha, 1 beta, 1 beta', 1 gamma and 1 omega subunit. When a sigma factor is associated with the core the holoenzyme is formed, which can initiate transcription. It depends on Mg(2+) as a cofactor. Zn(2+) serves as cofactor.

It carries out the reaction RNA(n) + a ribonucleoside 5'-triphosphate = RNA(n+1) + diphosphate. Functionally, DNA-dependent RNA polymerase catalyzes the transcription of DNA into RNA using the four ribonucleoside triphosphates as substrates. This is DNA-directed RNA polymerase subunit gamma from Synechococcus elongatus (strain ATCC 33912 / PCC 7942 / FACHB-805) (Anacystis nidulans R2).